The following is a 318-amino-acid chain: Ornithine carbamoyltransferase (318 aa).

Residues 63–66 (STRT), Q90, R114, and 141–144 (HPCQ) contribute to the carbamoyl phosphate site. L-ornithine is bound by residues N172, D235, and 239 to 240 (SM). Carbamoyl phosphate contacts are provided by residues 275-276 (CL) and R303.

The protein belongs to the aspartate/ornithine carbamoyltransferase superfamily. OTCase family.

Its subcellular location is the cytoplasm. The enzyme catalyses carbamoyl phosphate + L-ornithine = L-citrulline + phosphate + H(+). It participates in amino-acid biosynthesis; L-arginine biosynthesis; L-arginine from L-ornithine and carbamoyl phosphate: step 1/3. Its function is as follows. Reversibly catalyzes the transfer of the carbamoyl group from carbamoyl phosphate (CP) to the N(epsilon) atom of ornithine (ORN) to produce L-citrulline. The chain is Ornithine carbamoyltransferase from Parasynechococcus marenigrum (strain WH8102).